The chain runs to 274 residues: Putative hydro-lyase Veis_4744 (274 aa).

The protein belongs to the D-glutamate cyclase family.

This Verminephrobacter eiseniae (strain EF01-2) protein is Putative hydro-lyase Veis_4744.